The primary structure comprises 196 residues: Protein LIGHT-DEPENDENT SHORT HYPOCOTYLS 6 (196 aa).

The segment covering 1 to 16 (MESADSGRSDPVKGDD) has biased composition (basic and acidic residues). 2 disordered regions span residues 1 to 36 (MESA…ESQK) and 149 to 196 (ARGI…AVPP). The region spanning 31 to 158 (RYESQKRRDW…ARGIPYEKKK (128 aa)) is the ALOG domain. The short motif at 156-160 (KKKRK) is the Nuclear localization signal element.

This sequence belongs to the plant homeotic and developmental regulators ALOG protein family.

It localises to the nucleus. In terms of biological role, probable transcription regulator that acts as a developmental regulator by promoting cell growth in response to light. The sequence is that of Protein LIGHT-DEPENDENT SHORT HYPOCOTYLS 6 (LSH6) from Arabidopsis thaliana (Mouse-ear cress).